Consider the following 119-residue polypeptide: Ribonuclease P protein component (119 aa).

The protein belongs to the RnpA family. As to quaternary structure, consists of a catalytic RNA component (M1 or rnpB) and a protein subunit.

It catalyses the reaction Endonucleolytic cleavage of RNA, removing 5'-extranucleotides from tRNA precursor.. Its function is as follows. RNaseP catalyzes the removal of the 5'-leader sequence from pre-tRNA to produce the mature 5'-terminus. It can also cleave other RNA substrates such as 4.5S RNA. The protein component plays an auxiliary but essential role in vivo by binding to the 5'-leader sequence and broadening the substrate specificity of the ribozyme. This is Ribonuclease P protein component from Pectobacterium atrosepticum (strain SCRI 1043 / ATCC BAA-672) (Erwinia carotovora subsp. atroseptica).